The sequence spans 267 residues: Coiled-coil domain-containing protein 172 (267 aa).

Coiled coils occupy residues 24–97 (MREV…CEAI) and 128–191 (LMKE…EETE).

It belongs to the CCDC172 family. In terms of assembly, may interact with TEKT2.

The protein localises to the cytoplasm. Its subcellular location is the cell projection. It localises to the cilium. The protein is Coiled-coil domain-containing protein 172 (Ccdc172) of Mus musculus (Mouse).